Reading from the N-terminus, the 307-residue chain is Methionyl-tRNA formyltransferase (307 aa).

108 to 111 contributes to the (6S)-5,6,7,8-tetrahydrofolate binding site; sequence SLLP.

Belongs to the Fmt family.

It catalyses the reaction L-methionyl-tRNA(fMet) + (6R)-10-formyltetrahydrofolate = N-formyl-L-methionyl-tRNA(fMet) + (6S)-5,6,7,8-tetrahydrofolate + H(+). Attaches a formyl group to the free amino group of methionyl-tRNA(fMet). The formyl group appears to play a dual role in the initiator identity of N-formylmethionyl-tRNA by promoting its recognition by IF2 and preventing the misappropriation of this tRNA by the elongation apparatus. This Xylella fastidiosa (strain 9a5c) protein is Methionyl-tRNA formyltransferase.